The chain runs to 492 residues: N-succinylglutamate 5-semialdehyde dehydrogenase (492 aa).

220 to 225 contacts NAD(+); that stretch reads GSANTG. Active-site residues include glutamate 243 and cysteine 277.

This sequence belongs to the aldehyde dehydrogenase family. AstD subfamily.

It catalyses the reaction N-succinyl-L-glutamate 5-semialdehyde + NAD(+) + H2O = N-succinyl-L-glutamate + NADH + 2 H(+). Its pathway is amino-acid degradation; L-arginine degradation via AST pathway; L-glutamate and succinate from L-arginine: step 4/5. Its function is as follows. Catalyzes the NAD-dependent reduction of succinylglutamate semialdehyde into succinylglutamate. The polypeptide is N-succinylglutamate 5-semialdehyde dehydrogenase (Escherichia coli O6:K15:H31 (strain 536 / UPEC)).